Reading from the N-terminus, the 261-residue chain is ATP synthase subunit a (261 aa).

Residues 1 to 14 (MSTLSFNNISTEVL) constitute a propeptide, removed in mature form. 7 helical membrane passes run 38-58 (ITNIGFYLTIGAFFFLVINLL), 96-116 (IYFPFIYTLFIFILINNLIGM), 126-146 (HFVVTFALSFTIVLGATILGF), 153-173 (FFSLLVPAGCPLALLPLLVLI), 191-211 (ANILSGHMLLHILAGFTYNIM), 214-234 (GIIFFFLGLIPLAFIIAFSGL), and 235-255 (ELGIAFIQAQVFVVLTSGYIK).

It belongs to the ATPase A chain family. As to quaternary structure, F-type ATPases have 2 components, CF(1) - the catalytic core - and CF(0) - the membrane proton channel. CF(1) has five subunits: alpha(3), beta(3), gamma(1), delta(1), epsilon(1). CF(0) has three main subunits: a, b and c.

The protein resides in the mitochondrion inner membrane. Its function is as follows. Mitochondrial membrane ATP synthase (F(1)F(0) ATP synthase or Complex V) produces ATP from ADP in the presence of a proton gradient across the membrane which is generated by electron transport complexes of the respiratory chain. F-type ATPases consist of two structural domains, F(1) - containing the extramembraneous catalytic core and F(0) - containing the membrane proton channel, linked together by a central stalk and a peripheral stalk. During catalysis, ATP synthesis in the catalytic domain of F(1) is coupled via a rotary mechanism of the central stalk subunits to proton translocation. Key component of the proton channel; it may play a direct role in the translocation of protons across the membrane. The polypeptide is ATP synthase subunit a (atp-6) (Neurospora crassa (strain ATCC 24698 / 74-OR23-1A / CBS 708.71 / DSM 1257 / FGSC 987)).